The following is a 454-amino-acid chain: Bifunctional protein GlmU (454 aa).

The pyrophosphorylase stretch occupies residues Met1–Arg229. UDP-N-acetyl-alpha-D-glucosamine is bound by residues Leu8–Gly11, Lys22, Gln72, and Gly77–Thr78. Asp102 serves as a coordination point for Mg(2+). Residues Gly139, Glu154, and Asn227 each contribute to the UDP-N-acetyl-alpha-D-glucosamine site. Asn227 provides a ligand contact to Mg(2+). Residues Val230–Asn250 are linker. The N-acetyltransferase stretch occupies residues Gly251–Glu454. The UDP-N-acetyl-alpha-D-glucosamine site is built by Arg332 and Lys350. The Proton acceptor role is filled by His362. Residues Tyr365 and Asn376 each coordinate UDP-N-acetyl-alpha-D-glucosamine. Residues Asn385–Tyr386, Ala422, and Arg439 each bind acetyl-CoA.

It in the N-terminal section; belongs to the N-acetylglucosamine-1-phosphate uridyltransferase family. This sequence in the C-terminal section; belongs to the transferase hexapeptide repeat family. As to quaternary structure, homotrimer. Requires Mg(2+) as cofactor.

The protein resides in the cytoplasm. The catalysed reaction is alpha-D-glucosamine 1-phosphate + acetyl-CoA = N-acetyl-alpha-D-glucosamine 1-phosphate + CoA + H(+). The enzyme catalyses N-acetyl-alpha-D-glucosamine 1-phosphate + UTP + H(+) = UDP-N-acetyl-alpha-D-glucosamine + diphosphate. Its pathway is nucleotide-sugar biosynthesis; UDP-N-acetyl-alpha-D-glucosamine biosynthesis; N-acetyl-alpha-D-glucosamine 1-phosphate from alpha-D-glucosamine 6-phosphate (route II): step 2/2. It functions in the pathway nucleotide-sugar biosynthesis; UDP-N-acetyl-alpha-D-glucosamine biosynthesis; UDP-N-acetyl-alpha-D-glucosamine from N-acetyl-alpha-D-glucosamine 1-phosphate: step 1/1. It participates in bacterial outer membrane biogenesis; LPS lipid A biosynthesis. Its function is as follows. Catalyzes the last two sequential reactions in the de novo biosynthetic pathway for UDP-N-acetylglucosamine (UDP-GlcNAc). The C-terminal domain catalyzes the transfer of acetyl group from acetyl coenzyme A to glucosamine-1-phosphate (GlcN-1-P) to produce N-acetylglucosamine-1-phosphate (GlcNAc-1-P), which is converted into UDP-GlcNAc by the transfer of uridine 5-monophosphate (from uridine 5-triphosphate), a reaction catalyzed by the N-terminal domain. The protein is Bifunctional protein GlmU of Staphylococcus carnosus (strain TM300).